The chain runs to 271 residues: 4-diphosphocytidyl-2-C-methyl-D-erythritol kinase (271 aa).

Lysine 17 is a catalytic residue. Position 97-107 (97-107) interacts with ATP; that stretch reads PVGSGLGGGSS. Residue aspartate 137 is part of the active site.

Belongs to the GHMP kinase family. IspE subfamily.

The enzyme catalyses 4-CDP-2-C-methyl-D-erythritol + ATP = 4-CDP-2-C-methyl-D-erythritol 2-phosphate + ADP + H(+). Its pathway is isoprenoid biosynthesis; isopentenyl diphosphate biosynthesis via DXP pathway; isopentenyl diphosphate from 1-deoxy-D-xylulose 5-phosphate: step 3/6. In terms of biological role, catalyzes the phosphorylation of the position 2 hydroxy group of 4-diphosphocytidyl-2C-methyl-D-erythritol. This chain is 4-diphosphocytidyl-2-C-methyl-D-erythritol kinase, found in Thermotoga petrophila (strain ATCC BAA-488 / DSM 13995 / JCM 10881 / RKU-1).